The primary structure comprises 219 residues: Glucagon-2 (219 aa).

A signal peptide spans 1 to 20; the sequence is MKSTCYMIGILLLILQNTYQ. Propeptides lie at residues 21-50, 84-95, 136-140, 175-178, and 213-219; these read SPVP…LKEV, SGGLSRRNADYE, NAEIE, IRYS, and KDLLEEH. Positions 23 to 43 are disordered; it reads VPEADGSSRSVKAARNEAVDD.

The protein belongs to the glucagon family.

Its subcellular location is the secreted. In terms of biological role, promotes hydrolysis of glycogen and lipids, and raises the blood sugar level. The sequence is that of Glucagon-2 (gcg2) from Xenopus laevis (African clawed frog).